Reading from the N-terminus, the 248-residue chain is DNA repair protein RecO (248 aa).

Belongs to the RecO family.

Its function is as follows. Involved in DNA repair and RecF pathway recombination. This Bartonella tribocorum (strain CIP 105476 / IBS 506) protein is DNA repair protein RecO.